Reading from the N-terminus, the 424-residue chain is Glutamyl-tRNA(Gln) amidotransferase subunit D (424 aa).

The interval 58–79 (NTNGGLNGGKEHKTAGEEVQKS) is disordered. Over residues 66–78 (GKEHKTAGEEVQK) the composition is skewed to basic and acidic residues. One can recognise an Asparaginase/glutaminase domain in the interval 84–406 (PKVAILSTGG…LGQTDEFNEA (323 aa)). Catalysis depends on residues T94, T170, D171, and K247.

Belongs to the asparaginase 1 family. GatD subfamily. As to quaternary structure, heterodimer of GatD and GatE.

The enzyme catalyses L-glutamyl-tRNA(Gln) + L-glutamine + ATP + H2O = L-glutaminyl-tRNA(Gln) + L-glutamate + ADP + phosphate + H(+). Functionally, allows the formation of correctly charged Gln-tRNA(Gln) through the transamidation of misacylated Glu-tRNA(Gln) in organisms which lack glutaminyl-tRNA synthetase. The reaction takes place in the presence of glutamine and ATP through an activated gamma-phospho-Glu-tRNA(Gln). The GatDE system is specific for glutamate and does not act on aspartate. The sequence is that of Glutamyl-tRNA(Gln) amidotransferase subunit D from Methanosarcina barkeri (strain Fusaro / DSM 804).